The primary structure comprises 245 residues: DNA repair protein RecO (245 aa).

Belongs to the RecO family.

Its function is as follows. Involved in DNA repair and RecF pathway recombination. The protein is DNA repair protein RecO of Chromobacterium violaceum (strain ATCC 12472 / DSM 30191 / JCM 1249 / CCUG 213 / NBRC 12614 / NCIMB 9131 / NCTC 9757 / MK).